The primary structure comprises 266 residues: Apolipoprotein A-I (266 aa).

The N-terminal stretch at 1–18 is a signal peptide; it reads MKAVVLTLAVLFLTGSQA. Tandem repeats lie at residues 67-88 and 89-110. Residues 67–266 form a 10 X approximate tandem repeats region; that stretch reads LKLLDNWDTL…DEATKKLNAQ (200 aa). Residue Met109 is modified to Methionine sulfoxide. Residues 111 to 121 form a 3; half-length repeat; it reads KDLEEVKQKVQ. 5 repeat units span residues 122 to 143, 144 to 165, 166 to 187, 188 to 209, and 210 to 231. The stretch at 232-242 is one 9; half-length repeat; the sequence is PALEDLRQGLL. Residues 243-266 form repeat 10; sequence PVLESFKVGLMAIVDEATKKLNAQ.

This sequence belongs to the apolipoprotein A1/A4/E family. In terms of assembly, homodimer. Interacts with APOA1BP and CLU. Component of a sperm activating protein complex (SPAP), consisting of APOA1, an immunoglobulin heavy chain, an immunoglobulin light chain and albumin. Interacts with NDRG1. Interacts with SCGB3A2. Interacts with NAXE and YJEFN3. Post-translationally, glycosylated. Palmitoylated. In terms of processing, phosphorylation sites are present in the extracellular medium.

It is found in the secreted. Functionally, participates in the reverse transport of cholesterol from tissues to the liver for excretion by promoting cholesterol efflux from tissues and by acting as a cofactor for the lecithin cholesterol acyltransferase (LCAT). As part of the SPAP complex, activates spermatozoa motility. This chain is Apolipoprotein A-I (APOA1), found in Acinonyx jubatus (Cheetah).